Here is a 734-residue protein sequence, read N- to C-terminus: Putative K(+)-stimulated pyrophosphate-energized sodium pump (734 aa).

The next 5 helical transmembrane spans lie at 3–23 (SILF…AYYF), 58–78 (IVGC…YGFH), 82–102 (VWVP…GFLG), 134–154 (VMGL…YLLL), and 169–189 (LCVI…QALF). Lysine 199 contributes to the substrate binding site. Positions 202, 206, 229, and 232 each coordinate Mg(2+). 7 consecutive transmembrane segments (helical) span residues 244–264 (LYES…AAFI), 275–295 (AVIA…IGIF), 314–334 (FGTN…LWLL), 336–356 (LDNW…GIVI), 377–397 (SGKT…MLST), 398–418 (AIPV…ASGF), and 423–443 (VGMG…TLGI). Aspartate 455 is a binding site for Mg(2+). A run of 4 helical transmembrane segments spans residues 491–511 (FAIG…IEEI), 557–577 (GMFL…NAVG), 629–649 (ILAP…GLLI), and 650–670 (GGLS…GAWD). Residues aspartate 670, aspartate 696, and aspartate 700 each coordinate Ca(2+). Residue lysine 703 participates in substrate binding. Residues 712-732 (ILIKLMSMVAIVMAGLTVAWS) traverse the membrane as a helical segment.

It belongs to the H(+)-translocating pyrophosphatase (TC 3.A.10) family. K(+)-stimulated subfamily. Homodimer. Requires Mg(2+) as cofactor.

It is found in the cell inner membrane. The enzyme catalyses Na(+)(in) + diphosphate + H2O = Na(+)(out) + 2 phosphate + H(+). With respect to regulation, requires K(+) for maximal activity. Functionally, sodium pump that utilizes the energy of pyrophosphate hydrolysis as the driving force for Na(+) movement across the membrane. This Bacteroides thetaiotaomicron (strain ATCC 29148 / DSM 2079 / JCM 5827 / CCUG 10774 / NCTC 10582 / VPI-5482 / E50) protein is Putative K(+)-stimulated pyrophosphate-energized sodium pump.